We begin with the raw amino-acid sequence, 108 residues long: DNA-directed RNA polymerase III subunit RPC10 (108 aa).

Residues cysteine 5, cysteine 8, cysteine 25, cysteine 28, cysteine 69, and cysteine 72 each coordinate Zn(2+). The C4-type zinc finger occupies 5–28 (CPGCGNGLIVEEGQRCHRFACNTC). Residues 65–107 (TAESCPKCEHPRAYFMQLQTRSADEPMTTFYKCCNAQCGHRWR) form a TFIIS-type zinc finger. A Hairpin motif is present at residues 88 to 89 (DE). Zn(2+) contacts are provided by cysteine 98 and cysteine 102.

It belongs to the archaeal RpoM/eukaryotic RPA12/RPB9/RPC11 RNA polymerase family. Component of the RNA polymerase III complex consisting of 17 subunits: a ten-subunit horseshoe-shaped catalytic core composed of POLR3A/RPC1, POLR3B/RPC2, POLR1C/RPAC1, POLR1D/RPAC2, POLR3K/RPC10, POLR2E/RPABC1, POLR2F/RPABC2, POLR2H/RPABC3, POLR2K/RPABC4 and POLR2L/RPABC5; a mobile stalk composed of two subunits POLR3H/RPC8 and CRCP/RPC9, protruding from the core and functioning primarily in transcription initiation; and additional subunits homologous to general transcription factors of the RNA polymerase II machinery, POLR3C/RPC3-POLR3F/RPC6-POLR3G/RPC7 heterotrimer required for transcription initiation and POLR3D/RPC4-POLR3E/RPC5 heterodimer involved in both transcription initiation and termination.

Its subcellular location is the nucleus. In terms of biological role, core component of RNA polymerase III (Pol III) which synthesizes small non-coding RNAs using the four ribonucleoside triphosphates as substrates. Can mediate Pol I proofreading of the nascent RNA transcript. Anchors into the Pol III active site to constantly monitor transcription fidelity, cleaves mis-incorporated 5'-ribonucleotides and restarts the transcription process. Once Pol III reaches the poly(dT) termination signal, can induce Pol III clamp opening and transcription termination. Pol III plays an important role in sensing and limiting infection by intracellular bacteria and DNA viruses. Acts as a nuclear and cytosolic DNA sensor involved in innate immune response. Can sense non-self dsDNA that serves as template for transcription into dsRNA. The non-self RNA polymerase III transcripts, such as Epstein-Barr virus-encoded RNAs (EBERs) induce type I interferon and NF-kappa-B through the RIG-I pathway. This Homo sapiens (Human) protein is DNA-directed RNA polymerase III subunit RPC10.